The sequence spans 101 residues: MAEIAVEVVYALPERQALLRLSVPAGTSAREAVLLSGIAEAFPGLDVQGCPLGIFGKLLARPEERVLETGERVEIYRPLIADPKEVRKQRAARARSEREGG.

The protein belongs to the UPF0125 (RnfH) family.

The sequence is that of Protein RnfH from Pseudomonas aeruginosa (strain UCBPP-PA14).